The primary structure comprises 225 residues: Membrane protein (225 aa).

Residues 1-20 (MSNETNCTLDFEQSVELFKE) are Virion surface-facing. The chain crosses the membrane as a helical span at residues 21-41 (YNLFITAFLLFLTIILQYGYA). The Intravirion segment spans residues 42 to 51 (TRIRFIYILK). The chain crosses the membrane as a helical span at residues 52–72 (MIVLWCFWPLNIAVGVISCIY). Topologically, residues 73 to 77 (PPNTG) are virion surface. The chain crosses the membrane as a helical span at residues 78 to 98 (GLVAAIILTVFACLSFVGYWI). Residues 99 to 225 (QSCRLFKRCR…VATGGSSLYT (127 aa)) are Intravirion-facing.

This sequence belongs to the gammacoronaviruses M protein family. As to quaternary structure, homomultimer. Interacts with envelope E protein in the budding compartment of the host cell, which is located between endoplasmic reticulum and the Golgi complex. Forms a complex with HE and S proteins. Interacts with nucleocapsid N protein. This interaction probably participates in RNA packaging into the virus.

Its subcellular location is the virion membrane. The protein resides in the host Golgi apparatus membrane. Its function is as follows. Component of the viral envelope that plays a central role in virus morphogenesis and assembly via its interactions with other viral proteins. This chain is Membrane protein, found in Avian infectious bronchitis virus (strain KB8523) (IBV).